A 121-amino-acid chain; its full sequence is Putative iron-sulfur cluster insertion protein ErpA (121 aa).

The iron-sulfur cluster site is built by cysteine 49, cysteine 113, and cysteine 115.

The protein belongs to the HesB/IscA family. In terms of assembly, homodimer. It depends on iron-sulfur cluster as a cofactor.

Functionally, required for insertion of 4Fe-4S clusters. This Verminephrobacter eiseniae (strain EF01-2) protein is Putative iron-sulfur cluster insertion protein ErpA.